The chain runs to 425 residues: Dihydroorotase (425 aa).

The Zn(2+) site is built by His56 and His58. Residues 58–60 (HYR) and Asn90 contribute to the substrate site. Residues Asp148, His175, and His228 each contribute to the Zn(2+) site. Asn274 provides a ligand contact to substrate. Zn(2+) is bound at residue Asp301. The active site involves Asp301. Substrate is bound by residues His305 and 319 to 320 (FG).

Belongs to the metallo-dependent hydrolases superfamily. DHOase family. Class I DHOase subfamily. It depends on Zn(2+) as a cofactor.

The catalysed reaction is (S)-dihydroorotate + H2O = N-carbamoyl-L-aspartate + H(+). It functions in the pathway pyrimidine metabolism; UMP biosynthesis via de novo pathway; (S)-dihydroorotate from bicarbonate: step 3/3. Catalyzes the reversible cyclization of carbamoyl aspartate to dihydroorotate. The chain is Dihydroorotase from Lactobacillus helveticus (strain DPC 4571).